Reading from the N-terminus, the 142-residue chain is Large ribosomal subunit protein uL11 (142 aa).

It belongs to the universal ribosomal protein uL11 family. As to quaternary structure, part of the ribosomal stalk of the 50S ribosomal subunit. Interacts with L10 and the large rRNA to form the base of the stalk. L10 forms an elongated spine to which L12 dimers bind in a sequential fashion forming a multimeric L10(L12)X complex. In terms of processing, one or more lysine residues are methylated.

Its function is as follows. Forms part of the ribosomal stalk which helps the ribosome interact with GTP-bound translation factors. The chain is Large ribosomal subunit protein uL11 from Pelotomaculum thermopropionicum (strain DSM 13744 / JCM 10971 / SI).